Here is a 464-residue protein sequence, read N- to C-terminus: Chaperone SurA (464 aa).

Residues 1–25 form the signal peptide; that stretch reads MTRYFSIVLSLLLAVSCVFLPVASA. PpiC domains lie at 175–277 and 292–391; these read GAQY…KLVE and ATEY…QRLG. The segment at 439–464 is disordered; sequence PADDHQTPSAAVIPATGAVLPSATKH.

The protein resides in the periplasm. It carries out the reaction [protein]-peptidylproline (omega=180) = [protein]-peptidylproline (omega=0). Its function is as follows. Chaperone involved in the correct folding and assembly of outer membrane proteins. Recognizes specific patterns of aromatic residues and the orientation of their side chains, which are found more frequently in integral outer membrane proteins. May act in both early periplasmic and late outer membrane-associated steps of protein maturation. This chain is Chaperone SurA, found in Xylella fastidiosa (strain 9a5c).